Here is a 555-residue protein sequence, read N- to C-terminus: 2-succinyl-5-enolpyruvyl-6-hydroxy-3-cyclohexene-1-carboxylate synthase (555 aa).

Belongs to the TPP enzyme family. MenD subfamily. Homodimer. The cofactor is Mg(2+). Mn(2+) is required as a cofactor. Requires thiamine diphosphate as cofactor.

It catalyses the reaction isochorismate + 2-oxoglutarate + H(+) = 5-enolpyruvoyl-6-hydroxy-2-succinyl-cyclohex-3-ene-1-carboxylate + CO2. The protein operates within quinol/quinone metabolism; 1,4-dihydroxy-2-naphthoate biosynthesis; 1,4-dihydroxy-2-naphthoate from chorismate: step 2/7. Its pathway is quinol/quinone metabolism; menaquinone biosynthesis. Catalyzes the thiamine diphosphate-dependent decarboxylation of 2-oxoglutarate and the subsequent addition of the resulting succinic semialdehyde-thiamine pyrophosphate anion to isochorismate to yield 2-succinyl-5-enolpyruvyl-6-hydroxy-3-cyclohexene-1-carboxylate (SEPHCHC). The protein is 2-succinyl-5-enolpyruvyl-6-hydroxy-3-cyclohexene-1-carboxylate synthase of Kineococcus radiotolerans (strain ATCC BAA-149 / DSM 14245 / SRS30216).